The primary structure comprises 267 residues: tRNA pseudouridine synthase A (267 aa).

Asp-51 acts as the Nucleophile in catalysis. Substrate is bound at residue Tyr-109.

This sequence belongs to the tRNA pseudouridine synthase TruA family. As to quaternary structure, homodimer.

It carries out the reaction uridine(38/39/40) in tRNA = pseudouridine(38/39/40) in tRNA. Formation of pseudouridine at positions 38, 39 and 40 in the anticodon stem and loop of transfer RNAs. This is tRNA pseudouridine synthase A from Staphylococcus aureus (strain Mu3 / ATCC 700698).